Consider the following 143-residue polypeptide: Putative pre-16S rRNA nuclease (143 aa).

Belongs to the YqgF nuclease family.

It is found in the cytoplasm. Its function is as follows. Could be a nuclease involved in processing of the 5'-end of pre-16S rRNA. In Leuconostoc citreum (strain KM20), this protein is Putative pre-16S rRNA nuclease.